Reading from the N-terminus, the 240-residue chain is Ribonuclease 3 (240 aa).

In terms of domain architecture, RNase III spans 4 to 134 (SRQPLLDALG…LLGAIYLQHG (131 aa)). E44 lines the Mg(2+) pocket. Residue D48 is part of the active site. Mg(2+)-binding residues include D120 and E123. E123 is an active-site residue. One can recognise a DRBM domain in the interval 161–229 (DWKTSLQELT…AAAAWKALEV (69 aa)).

It belongs to the ribonuclease III family. In terms of assembly, homodimer. Mg(2+) is required as a cofactor.

The protein resides in the cytoplasm. It catalyses the reaction Endonucleolytic cleavage to 5'-phosphomonoester.. In terms of biological role, digests double-stranded RNA. Involved in the processing of primary rRNA transcript to yield the immediate precursors to the large and small rRNAs (23S and 16S). Processes some mRNAs, and tRNAs when they are encoded in the rRNA operon. Processes pre-crRNA and tracrRNA of type II CRISPR loci if present in the organism. The protein is Ribonuclease 3 of Mycobacterium bovis (strain ATCC BAA-935 / AF2122/97).